A 463-amino-acid chain; its full sequence is Sporulation-specific protein 22 (463 aa).

The first 25 residues, 1-25 (MNRITRKSCLFAIIFASLFVTHALG), serve as a signal peptide directing secretion. 5 LRR repeats span residues 127–147 (SPEL…LFQL), 185–206 (IEII…NFNK), 207–233 (VQEI…TIRG), 251–275 (LREV…KVKS), and 302–325 (INNV…LMIA). N256, N314, and N327 each carry an N-linked (GlcNAc...) asparagine glycan. N440 carries GPI-anchor amidated asparagine lipidation. A propeptide spans 441 to 463 (SANPSMQLDPLLFGTCLVAMLLF) (removed in mature form).

Belongs to the SPS2 family.

It is found in the cell membrane. Redundant with SPS2 for the organization of the beta-glucan layer of the spore wall. The protein is Sporulation-specific protein 22 (SPS22) of Saccharomyces cerevisiae (strain ATCC 204508 / S288c) (Baker's yeast).